Here is a 563-residue protein sequence, read N- to C-terminus: Inclusion body clearance protein IML2 (563 aa).

Belongs to the IML2 family. As to quaternary structure, interacts with lipid droplet proteins.

The protein localises to the cytoplasm. The protein resides in the nucleus. In terms of biological role, inclusion body (IB) resident protein that interacts strongly with lipid droplet (LD) proteins. Involved in LD-mediated IB clearing after protein folding stress, probably by enabling access to the IBs of an LD-stored soluble sterol derivative that acts as a chaperone in inclusion clearing. This is Inclusion body clearance protein IML2 from Schizosaccharomyces pombe (strain 972 / ATCC 24843) (Fission yeast).